The primary structure comprises 365 residues: Protein-glutamate methylesterase/protein-glutamine glutaminase 2 (365 aa).

Positions 18–135 (RVLIVDDSAM…GQGLPAIMRD (118 aa)) constitute a Response regulatory domain. Asp69 is modified (4-aspartylphosphate). One can recognise a CheB-type methylesterase domain in the interval 162 to 355 (GASEDWIHAL…ARMMLAAAAD (194 aa)). Residues Ser174, His200, and Asp297 contribute to the active site.

It belongs to the CheB family. In terms of processing, phosphorylated by CheA. Phosphorylation of the N-terminal regulatory domain activates the methylesterase activity.

It localises to the cytoplasm. The catalysed reaction is [protein]-L-glutamate 5-O-methyl ester + H2O = L-glutamyl-[protein] + methanol + H(+). The enzyme catalyses L-glutaminyl-[protein] + H2O = L-glutamyl-[protein] + NH4(+). In terms of biological role, involved in chemotaxis. Part of a chemotaxis signal transduction system that modulates chemotaxis in response to various stimuli. Catalyzes the demethylation of specific methylglutamate residues introduced into the chemoreceptors (methyl-accepting chemotaxis proteins or MCP) by CheR. Also mediates the irreversible deamidation of specific glutamine residues to glutamic acid. The sequence is that of Protein-glutamate methylesterase/protein-glutamine glutaminase 2 from Cereibacter sphaeroides (strain ATCC 17023 / DSM 158 / JCM 6121 / CCUG 31486 / LMG 2827 / NBRC 12203 / NCIMB 8253 / ATH 2.4.1.) (Rhodobacter sphaeroides).